The following is a 481-amino-acid chain: Putative F-box/FBD/LRR-repeat protein At5g25850 (481 aa).

The region spanning 19-69 (INRLSQLSDPLICQILSHLPIKEVVTTSVLSTRWKNIWLSVPSLELIYSIF) is the F-box domain. 3 LRR repeats span residues 123-151 (VRRV…KLFH), 173-198 (VWFP…KIDV), and 328-356 (HVTL…IVAF). An FBD domain is found at 401–452 (QLSFSSVPKCLLSSLQFVELNAQILRFDGEILNLAKYFLENSSILQKLTLHP).

The polypeptide is Putative F-box/FBD/LRR-repeat protein At5g25850 (Arabidopsis thaliana (Mouse-ear cress)).